The primary structure comprises 147 residues: Hemoglobin subunit epsilon (147 aa).

The region spanning 3–147 (HFTAEEKSTI…VATALAHKYH (145 aa)) is the Globin domain. 2 positions are modified to phosphoserine: Ser14 and Ser51. Residues His64 and His93 each coordinate heme b.

This sequence belongs to the globin family. In terms of assembly, heterotetramer of two alpha chains and two epsilon chains in early embryonic hemoglobin Gower-2; two zeta chains and two epsilon chains in early embryonic hemoglobin Gower-1. In terms of tissue distribution, red blood cells.

Functionally, the epsilon chain is a beta-type chain of early mammalian embryonic hemoglobin. This is Hemoglobin subunit epsilon (HBE1) from Cheirogaleus medius (Fat-tailed dwarf lemur).